The primary structure comprises 89 residues: UPF0237 protein CE1668 (89 aa).

Residues 4–78 (IMTVTGQDHT…KEQGLVIRIQ (75 aa)) enclose the ACT domain.

The protein belongs to the UPF0237 family.

The chain is UPF0237 protein CE1668 from Corynebacterium efficiens (strain DSM 44549 / YS-314 / AJ 12310 / JCM 11189 / NBRC 100395).